We begin with the raw amino-acid sequence, 365 residues long: Solute carrier family 35 member G1 (365 aa).

The disordered stretch occupies residues 1-33 (MRPQDSTGVAELQEPGLPLTDDAPPGATEEPAA). A compositionally biased stretch (low complexity) spans 23–33 (APPGATEEPAA). The next 10 helical transmembrane spans lie at 69–89 (GLGL…SLFV), 97–117 (AVEI…PCLI), 131–151 (IFLI…YYAY), 156–176 (LADA…FAWI), 187–207 (ALFT…PFLF), 222–242 (LKGT…LVIL), 252–272 (FLSI…ILSV), 286–306 (LFLI…TKAL), 311–333 (AGPV…IIFF), and 338–357 (TWWT…GAAI). 2 consecutive EamA domains span residues 80–202 (FLFS…LIVR) and 233–357 (VFAA…GAAI).

The protein belongs to the TMEM20 family. Interacts with STIM1; stimulated by depletion of intracellular calcium. Interacts with ORAI1. Interacts with the plasma membrane calcium-transporting ATPases ATP2B1 and ATP2B4. Interacts with ATP1A1, ATP2A2, KPNB1 and XPO1. As to expression, ubiquitously expressed.

It localises to the cell membrane. Its subcellular location is the endoplasmic reticulum membrane. Its function is as follows. May play a role in intracellular calcium sensing and homeostasis. May act as a negative regulator of plasma membrane calcium-transporting ATPases preventing calcium efflux from the cell. The sequence is that of Solute carrier family 35 member G1 (SLC35G1) from Homo sapiens (Human).